The sequence spans 161 residues: Phenolic acid decarboxylase PadC (161 aa).

Substrate is bound by residues Tyr11 and Tyr13. Residue Tyr19 is the Proton donor of the active site. Arg41 is a binding site for substrate. The active-site Proton acceptor is Glu64.

The protein belongs to the PadC family. As to quaternary structure, homodimer.

It carries out the reaction (E)-4-coumarate + H(+) = 4-vinylphenol + CO2. It catalyses the reaction (E)-cinnamate + H(+) = styrene + CO2. The catalysed reaction is (E)-ferulate + H(+) = 2-methoxy-4-vinylphenol + CO2. Its function is as follows. Involved in the decarboxylation and detoxification of phenolic derivatives. It is able to catalyze the decarboxylation of ferulic, p-coumaric and caffeic acids. This chain is Phenolic acid decarboxylase PadC (padC), found in Bacillus subtilis (strain 168).